Here is a 331-residue protein sequence, read N- to C-terminus: Phospholipase A2 inhibitor (331 aa).

The first 23 residues, 1–23, serve as a signal peptide directing secretion; sequence MKSSVPSLLIACLVMSLNSYTQQ. N-linked (GlcNAc...) asparagine glycosylation occurs at N35. 8 LRR repeats span residues 78–101, 103–125, 127–149, 150–173, 175–197, 199–221, 223–244, and 245–268; these read LPNL…LFRN, PQLH…IFTN, SSLI…WFQT, LGEL…CFDK, KKLT…MFSG, DNLE…TFHW, PKLT…FFQP, and LEQL…VYKT. Residue N125 is glycosylated (N-linked (GlcNAc...) asparagine). Residue N232 is glycosylated (N-linked (GlcNAc...) asparagine). N271 carries N-linked (GlcNAc...) asparagine glycosylation. One can recognise an LRRCT domain in the interval 279-330; that stretch reads NPWACDCRLDNLLTWVNEHNIHLYSKEEIVCASPKHFKGECATSLHKSQICP.

Homotrimer.

It localises to the secreted. Inhibits the enzymatic activity of the basic phospholipase A2 (PLA2). In Gloydius brevicaudus siniticus (Chinese mamushi), this protein is Phospholipase A2 inhibitor.